Reading from the N-terminus, the 653-residue chain is MADVPADLAAVWPRVLEQLLGEGRGQGVEVKDEHWIKRCQPLALVADTALLAVPNEFAKGVLEGRLAPIVSETLSRECGRPIRIAITVDDSAGEPPASASPAPPRYEEPELPSGPGQGRDPYESRGREGYEGYGRHRADDHRQGHNDRHQGGPGDQLPPSRGDQLPTARPAYPDYQRPEPGAWPRPSQDDYGWQQQRLGFPERDPYASPSQDYRPQSMDRPSYDQDRPSYDHDRPSYDHDRPSYEQQRADYDQQRSDYDKRPDRRNIPDSSPGSGHVHRGGPVGSALPASSGAPGPLAAQPAPATGPGEPTARLNPKYLFDTFVIGASNRFAHAAAVAVAEAPAKAYNPLFIYGESGLGKTHLLHAIGHYARSLYPGTRVRYVSSEEFTNEFINSIRDGKGDSFRKRYREMDILLVDDIQFLADKESTQEEFFHTFNTLHNANKQIVLSSDRPPKQLVTLEDRLRNRFEWGLITDVQPPELETRIAILRKKAVQEQLNAPPEVLEFIASRISRNIRELEGALIRVTAFASLNRQPVDLGLTEIVLKDLIPGGEDSAPEITAPAIMAATADYFGLTVEDLCGTSRGRALVTARQIAMYLCRELTDLSLPKIGAQFGGRDHTTVMHADRKIRALMAERRSIYNQVTELTNRIKNG.

The tract at residues 1–100 (MADVPADLAA…SAGEPPASAS (100 aa)) is domain I, interacts with DnaA modulators. A disordered region spans residues 86-310 (ITVDDSAGEP…PAPATGPGEP (225 aa)). The segment at 101-312 (PAPPRYEEPE…PATGPGEPTA (212 aa)) is domain II. Composition is skewed to basic and acidic residues over residues 120–150 (DPYE…DRHQ) and 221–267 (PSYD…RRNI). Residues 284-310 (GSALPASSGAPGPLAAQPAPATGPGEP) are compositionally biased toward low complexity. Residues 313 to 529 (RLNPKYLFDT…GALIRVTAFA (217 aa)) are domain III, AAA+ region. ATP-binding residues include glycine 357, glycine 359, lysine 360, and threonine 361. Residues 530–653 (SLNRQPVDLG…TELTNRIKNG (124 aa)) are domain IV, binds dsDNA.

Belongs to the DnaA family. Oligomerizes as a right-handed, spiral filament on DNA at oriC.

It is found in the cytoplasm. Plays an essential role in the initiation and regulation of chromosomal replication. ATP-DnaA binds to the origin of replication (oriC) to initiate formation of the DNA replication initiation complex once per cell cycle. Binds the DnaA box (a 9 base pair repeat at the origin) and separates the double-stranded (ds)DNA. Forms a right-handed helical filament on oriC DNA; dsDNA binds to the exterior of the filament while single-stranded (ss)DNA is stabiized in the filament's interior. The ATP-DnaA-oriC complex binds and stabilizes one strand of the AT-rich DNA unwinding element (DUE), permitting loading of DNA polymerase. After initiation quickly degrades to an ADP-DnaA complex that is not apt for DNA replication. Binds acidic phospholipids. In Streptomyces avermitilis (strain ATCC 31267 / DSM 46492 / JCM 5070 / NBRC 14893 / NCIMB 12804 / NRRL 8165 / MA-4680), this protein is Chromosomal replication initiator protein DnaA.